The sequence spans 198 residues: dITP/XTP pyrophosphatase (198 aa).

7–12 (THNPHK) is a substrate binding site. Mg(2+)-binding residues include Glu40 and Asp69. Asp69 (proton acceptor) is an active-site residue. Substrate-binding positions include Thr70, 151–154 (FGYD), Lys174, and 179–180 (HR).

This sequence belongs to the HAM1 NTPase family. Homodimer. Requires Mg(2+) as cofactor.

It carries out the reaction XTP + H2O = XMP + diphosphate + H(+). The enzyme catalyses dITP + H2O = dIMP + diphosphate + H(+). It catalyses the reaction ITP + H2O = IMP + diphosphate + H(+). Functionally, pyrophosphatase that catalyzes the hydrolysis of nucleoside triphosphates to their monophosphate derivatives, with a high preference for the non-canonical purine nucleotides XTP (xanthosine triphosphate), dITP (deoxyinosine triphosphate) and ITP. Seems to function as a house-cleaning enzyme that removes non-canonical purine nucleotides from the nucleotide pool, thus preventing their incorporation into DNA/RNA and avoiding chromosomal lesions. The polypeptide is dITP/XTP pyrophosphatase (Thermoanaerobacter sp. (strain X514)).